The sequence spans 373 residues: tRNA-specific 2-thiouridylase MnmA (373 aa).

ATP-binding positions include 12–19 (GMSGGVDS) and M38. An interaction with target base in tRNA region spans residues 98–100 (NPD). The active-site Nucleophile is C103. Cysteines 103 and 200 form a disulfide. G127 contacts ATP. Positions 150–152 (KDQ) are interaction with tRNA. The active-site Cysteine persulfide intermediate is the C200. Residues 312-313 (RY) form an interaction with tRNA region.

This sequence belongs to the MnmA/TRMU family.

It localises to the cytoplasm. The enzyme catalyses S-sulfanyl-L-cysteinyl-[protein] + uridine(34) in tRNA + AH2 + ATP = 2-thiouridine(34) in tRNA + L-cysteinyl-[protein] + A + AMP + diphosphate + H(+). Catalyzes the 2-thiolation of uridine at the wobble position (U34) of tRNA, leading to the formation of s(2)U34. This chain is tRNA-specific 2-thiouridylase MnmA, found in Streptococcus pyogenes serotype M49 (strain NZ131).